The chain runs to 224 residues: UPF0758 protein NE1464 (224 aa).

The MPN domain occupies 102 to 224 (IMDSPQSVRN…VVSFAERGLI (123 aa)). The Zn(2+) site is built by His173, His175, and Asp186. Residues 173-186 (HNHPSGIAEPSTAD) carry the JAMM motif motif.

The protein belongs to the UPF0758 family.

In Nitrosomonas europaea (strain ATCC 19718 / CIP 103999 / KCTC 2705 / NBRC 14298), this protein is UPF0758 protein NE1464.